A 306-amino-acid polypeptide reads, in one-letter code: Ribonuclease Z (306 aa).

Zn(2+) contacts are provided by His-63, His-65, Asp-67, His-68, His-141, Asp-211, and His-269. Catalysis depends on Asp-67, which acts as the Proton acceptor.

This sequence belongs to the RNase Z family. In terms of assembly, homodimer. Zn(2+) serves as cofactor.

The enzyme catalyses Endonucleolytic cleavage of RNA, removing extra 3' nucleotides from tRNA precursor, generating 3' termini of tRNAs. A 3'-hydroxy group is left at the tRNA terminus and a 5'-phosphoryl group is left at the trailer molecule.. In terms of biological role, zinc phosphodiesterase, which displays some tRNA 3'-processing endonuclease activity. Probably involved in tRNA maturation, by removing a 3'-trailer from precursor tRNA. The protein is Ribonuclease Z of Staphylococcus epidermidis (strain ATCC 35984 / DSM 28319 / BCRC 17069 / CCUG 31568 / BM 3577 / RP62A).